The primary structure comprises 316 residues: 4-hydroxy-3-methylbut-2-enyl diphosphate reductase (316 aa).

Cys12 lines the [4Fe-4S] cluster pocket. Positions 41 and 74 each coordinate (2E)-4-hydroxy-3-methylbut-2-enyl diphosphate. The dimethylallyl diphosphate site is built by His41 and His74. Residues His41 and His74 each coordinate isopentenyl diphosphate. Cys96 is a [4Fe-4S] cluster binding site. (2E)-4-hydroxy-3-methylbut-2-enyl diphosphate is bound at residue His124. Position 124 (His124) interacts with dimethylallyl diphosphate. His124 lines the isopentenyl diphosphate pocket. Glu126 serves as the catalytic Proton donor. Thr167 lines the (2E)-4-hydroxy-3-methylbut-2-enyl diphosphate pocket. Residue Cys197 coordinates [4Fe-4S] cluster. The (2E)-4-hydroxy-3-methylbut-2-enyl diphosphate site is built by Ser225, Ser226, Asn227, and Ser269. Positions 225, 226, 227, and 269 each coordinate dimethylallyl diphosphate. 4 residues coordinate isopentenyl diphosphate: Ser225, Ser226, Asn227, and Ser269.

This sequence belongs to the IspH family. As to quaternary structure, homodimer. Requires [4Fe-4S] cluster as cofactor.

It catalyses the reaction isopentenyl diphosphate + 2 oxidized [2Fe-2S]-[ferredoxin] + H2O = (2E)-4-hydroxy-3-methylbut-2-enyl diphosphate + 2 reduced [2Fe-2S]-[ferredoxin] + 2 H(+). The catalysed reaction is dimethylallyl diphosphate + 2 oxidized [2Fe-2S]-[ferredoxin] + H2O = (2E)-4-hydroxy-3-methylbut-2-enyl diphosphate + 2 reduced [2Fe-2S]-[ferredoxin] + 2 H(+). It participates in isoprenoid biosynthesis; dimethylallyl diphosphate biosynthesis; dimethylallyl diphosphate from (2E)-4-hydroxy-3-methylbutenyl diphosphate: step 1/1. The protein operates within isoprenoid biosynthesis; isopentenyl diphosphate biosynthesis via DXP pathway; isopentenyl diphosphate from 1-deoxy-D-xylulose 5-phosphate: step 6/6. Catalyzes the conversion of 1-hydroxy-2-methyl-2-(E)-butenyl 4-diphosphate (HMBPP) into a mixture of isopentenyl diphosphate (IPP) and dimethylallyl diphosphate (DMAPP). Acts in the terminal step of the DOXP/MEP pathway for isoprenoid precursor biosynthesis. This is 4-hydroxy-3-methylbut-2-enyl diphosphate reductase from Salmonella agona (strain SL483).